A 337-amino-acid polypeptide reads, in one-letter code: Arylacetonitrilase (337 aa).

Residues 7–278 (VRVAVTQHEP…EGFVYADLDL (272 aa)) form the CN hydrolase domain. The active-site Proton acceptor is the Glu47. Lys127 is an active-site residue. Cys162 functions as the Nucleophile in the catalytic mechanism. Residues 311 to 337 (QHRPEGQADNAAYGLDVPSGLVEEEGA) are disordered.

It belongs to the carbon-nitrogen hydrolase superfamily. Nitrilase family.

The enzyme catalyses a nitrile + 2 H2O = a carboxylate + NH4(+). It carries out the reaction 4-chlorophenylacetonitrile + 2 H2O = 4-chlorophenylacetate + NH4(+). Nitrilase that hydrolyzes preferentially phenylacetonitrile, but also (R,S)-mandelonitrile, and 2-phenylpropionitrile. The sequence is that of Arylacetonitrilase from Aspergillus niger (strain ATCC MYA-4892 / CBS 513.88 / FGSC A1513).